The chain runs to 855 residues: Envelope glycoprotein gp150 (855 aa).

Residues 1–784 lie on the Extracellular side of the membrane; that stretch reads MAEGGFTHNQ…WIGKIPQYLK (784 aa). Asn-135, Asn-220, Asn-258, Asn-269, Asn-274, Asn-298, Asn-330, Asn-336, Asn-342, Asn-372, Asn-418, Asn-422, Asn-448, Asn-469, Asn-481, Asn-499, Asn-518, Asn-531, Asn-548, and Asn-551 each carry an N-linked (GlcNAc...) asparagine; by host glycan. The tract at residues 615 to 635 is fusion peptide; the sequence is IMLALATVLSMAGAGTGATAI. Positions 642-692 form a coiled coil; that stretch reads HQVLATHQQALEKITEALKINNLRLITLEHQVLVIGLRVEAIEKFLYTAFA. An immunosuppression region spans residues 661–679; the sequence is INNLRLITLEHQVLVIGLR. Residues Asn-716, Asn-720, Asn-728, and Asn-736 are each glycosylated (N-linked (GlcNAc...) asparagine; by host). Residues 735 to 771 adopt a coiled-coil conformation; it reads YNQTRDLQNKFYEIIMDIEQNNVQGKTGIQQLQKWEN. Residues 785 to 805 traverse the membrane as a helical segment; that stretch reads GLLGSVLGIGLGILLLLICLP. The Cytoplasmic portion of the chain corresponds to 806–855; sequence TLVDCIRNCTNKILGYTVIAMPEIDDEEVHLSVELRRNGRQCGISEKEEE.

As to quaternary structure, the mature envelope protein (Env) consists of a trimer of SU-TM heterodimers attached by noncovalent interactions or by a labile interchain disulfide bond. Specific enzymatic cleavages in vivo yield mature proteins. Envelope glycoproteins are synthesized as an inactive precursor that is N-glycosylated and processed likely by host cell furin or by a furin-like protease in the Golgi to yield the mature SU and TM proteins. The cleavage site between SU and TM requires the minimal sequence [KR]-X-[KR]-R.

Its subcellular location is the virion membrane. It localises to the host cell membrane. Functionally, the surface protein (SU) attaches the virus to the host cell by binding to its receptor. This interaction triggers the refolding of the transmembrane protein (TM) and is thought to activate its fusogenic potential by unmasking its fusion peptide. Fusion occurs at the host cell plasma membrane. Its function is as follows. The transmembrane protein (TM) acts as a class I viral fusion protein. Under the current model, the protein has at least 3 conformational states: pre-fusion native state, pre-hairpin intermediate state, and post-fusion hairpin state. During viral and target cell membrane fusion, the coiled coil regions (heptad repeats) assume a trimer-of-hairpins structure, positioning the fusion peptide in close proximity to the C-terminal region of the ectodomain. The formation of this structure appears to drive apposition and subsequent fusion of viral and target cell membranes. Membranes fusion leads to delivery of the nucleocapsid into the cytoplasm. This chain is Envelope glycoprotein gp150 (env), found in Feline immunodeficiency virus (isolate TM2) (FIV).